The sequence spans 195 residues: Protein lin-28 homolog A (195 aa).

One can recognise a CSD domain in the interval Gln-33–Pro-106. The segment at Leu-98–Arg-127 is disordered. The segment at Gly-107–Gly-130 is flexible linker. Over residues Pro-118–Arg-127 the composition is skewed to basic residues. CCHC-type zinc fingers lie at residues Asp-131–Leu-148 and Lys-153–Glu-170. Zn(2+) is bound by residues Cys-133, Cys-136, His-141, Cys-146, Cys-155, Cys-158, His-163, and Cys-168.

Belongs to the lin-28 family. Monomer.

It is found in the cytoplasm. Its subcellular location is the rough endoplasmic reticulum. The protein localises to the P-body. It localises to the stress granule. The protein resides in the nucleus. It is found in the nucleolus. Functionally, RNA-binding protein that inhibits processing of pre-let-7 miRNAs and regulates translation of mRNAs that control developmental timing, pluripotency and metabolism. Seems to recognize a common structural G-quartet (G4) feature in its miRNA and mRNA targets. 'Translational enhancer' that drives specific mRNAs to polysomes and increases the efficiency of protein synthesis. Its association with the translational machinery and target mRNAs results in an increased number of initiation events per molecule of mRNA and, indirectly, in mRNA stabilization. Suppressor of microRNA (miRNA) biogenesis, including that of let-7. Binds specific target miRNA precursors (pre-miRNAs), recognizing an 5'-GGAG-3' motif found in their terminal loop, and recruits uridylyltransferase. This results in the terminal uridylation of target pre-miRNAs. Uridylated pre-miRNAs fail to be processed by Dicer and undergo degradation. Localized to the periendoplasmic reticulum area, binds to a large number of spliced mRNAs and inhibits the translation of mRNAs destined for the ER, reducing the synthesis of transmembrane proteins, ER or Golgi lumen proteins, and secretory proteins. Binds to and enhances the translation of mRNAs for several metabolic enzymes, increasing glycolysis and oxidative phosphorylation. Which, with the let-7 repression may enhance tissue repair in adult tissue. The polypeptide is Protein lin-28 homolog A (lin28a) (Xenopus laevis (African clawed frog)).